The chain runs to 311 residues: Ribosomal RNA small subunit methyltransferase H (311 aa).

S-adenosyl-L-methionine contacts are provided by residues 34 to 36 (GGH), aspartate 54, phenylalanine 78, aspartate 100, and glutamine 107.

This sequence belongs to the methyltransferase superfamily. RsmH family.

The protein resides in the cytoplasm. The catalysed reaction is cytidine(1402) in 16S rRNA + S-adenosyl-L-methionine = N(4)-methylcytidine(1402) in 16S rRNA + S-adenosyl-L-homocysteine + H(+). Functionally, specifically methylates the N4 position of cytidine in position 1402 (C1402) of 16S rRNA. This Hamiltonella defensa subsp. Acyrthosiphon pisum (strain 5AT) protein is Ribosomal RNA small subunit methyltransferase H.